The chain runs to 175 residues: ATP synthase subunit d, mitochondrial (175 aa).

N-acetylserine is present on Ser2.

It belongs to the ATPase d subunit family.

The protein resides in the mitochondrion inner membrane. Its function is as follows. Mitochondrial membrane ATP synthase (F(1)F(0) ATP synthase or Complex V) produces ATP from ADP in the presence of a proton gradient across the membrane which is generated by electron transport complexes of the respiratory chain. F-type ATPases consist of two structural domains, F(1) - containing the extramembraneous catalytic core, and F(0) - containing the membrane proton channel, linked together by a central stalk and a peripheral stalk. During catalysis, ATP synthesis in the catalytic domain of F(1) is coupled via a rotary mechanism of the central stalk subunits to proton translocation. Part of the complex F(0) domain and the peripheric stalk, which acts as a stator to hold the catalytic alpha(3)beta(3) subcomplex and subunit a/ATP6 static relative to the rotary elements. The sequence is that of ATP synthase subunit d, mitochondrial (atp7) from Schizosaccharomyces pombe (strain 972 / ATCC 24843) (Fission yeast).